The following is a 111-amino-acid chain: Large ribosomal subunit protein uL23 (111 aa).

This sequence belongs to the universal ribosomal protein uL23 family. As to quaternary structure, part of the 50S ribosomal subunit. Contacts protein L29, and trigger factor when it is bound to the ribosome.

One of the early assembly proteins it binds 23S rRNA. One of the proteins that surrounds the polypeptide exit tunnel on the outside of the ribosome. Forms the main docking site for trigger factor binding to the ribosome. The sequence is that of Large ribosomal subunit protein uL23 from Nitrosomonas eutropha (strain DSM 101675 / C91 / Nm57).